We begin with the raw amino-acid sequence, 278 residues long: Phosphonates import ATP-binding protein PhnC (278 aa).

The region spanning 25–273 (LAVKGLVKAY…IIQDIYSDES (249 aa)) is the ABC transporter domain. 58–65 (GRSGAGKS) contributes to the ATP binding site.

It belongs to the ABC transporter superfamily. Phosphonates importer (TC 3.A.1.9.1) family. As to quaternary structure, the complex is composed of two ATP-binding proteins (PhnC), two transmembrane proteins (PhnE) and a solute-binding protein (PhnD).

It localises to the cell inner membrane. The enzyme catalyses phosphonate(out) + ATP + H2O = phosphonate(in) + ADP + phosphate + H(+). Its function is as follows. Part of the ABC transporter complex PhnCDE involved in phosphonates import. Responsible for energy coupling to the transport system. In Yersinia pestis bv. Antiqua (strain Antiqua), this protein is Phosphonates import ATP-binding protein PhnC.